The chain runs to 608 residues: FAD-binding monooxygenase ktnD (608 aa).

An N-linked (GlcNAc...) asparagine glycan is attached at N4. The helical transmembrane segment at 17-37 threads the bilayer; it reads ATVVIIGAGVSGMCMAIDLLH. FAD-binding positions include 56-59, 68-69, and Y74; these read TWAN and DV. An NADP(+)-binding site is contributed by 66–68; that stretch reads ASD. N-linked (GlcNAc...) asparagine glycosylation occurs at N114. NADP(+)-binding positions include 201 to 207 and 224 to 225; these read NGASAIQ and RS. A glycan (N-linked (GlcNAc...) asparagine) is linked at N325. A helical transmembrane segment spans residues 535–555; the sequence is ALVSNVTLFLGVALAAGGVYW.

It belongs to the FAD-binding monooxygenase family. The cofactor is FAD.

The protein resides in the membrane. Functionally, non-reducing polyketide synthase; part of the gene cluster that mediates the biosynthesis of the bicoumarin kotanin. The non-reducing polyketide synthase ktnS first catalyzes the formation of the pentaketidic 4,7-dihydroxy-5-methylcoumarin from acetyl coenzyme A and 4 malonyl coenzyme A molecules. Further O-methylation by ktnB leads to the formation of 7-demethylsiderin. Then, an oxidative phenol coupling catalyzed by the cytochrome P450 monooxygenase ktnC forms the 8,8'-dimer P-orlandin via dimerization the monomeric precursor, 7-demethylsiderin. P-orlandin is subsequently O-methylated in a stepwise fashion to demethylkotanin and kotanin. The function of ktnD within the pathway has not been determined yet. In Aspergillus niger (strain ATCC MYA-4892 / CBS 513.88 / FGSC A1513), this protein is FAD-binding monooxygenase ktnD.